The following is a 507-amino-acid chain: Protein DETOXIFICATION 41 (507 aa).

Residues 1–62 (MSSTETYEPL…KLLWTLSGAS (62 aa)) are Cytoplasmic-facing. A helical transmembrane segment spans residues 63-83 (IVVSVLNYMLSFVTVMFTGHL). At 84–92 (GSLQLAGAS) the chain is on the vacuolar side. A helical membrane pass occupies residues 93 to 113 (IATVGIQGLAYGIMLGMASAV). Residues 114-137 (QTVCGQAYGARQYSSMGIICQRAM) are Cytoplasmic-facing. Residues 138-158 (VLHLAAAVFLTFLYWYSGPIL) form a helical membrane-spanning segment. At 159–170 (KTMGQSVAIAHE) the chain is on the vacuolar side. The helical transmembrane segment at 171 to 191 (GQIFARGMIPQIYAFALACPM) threads the bilayer. The Cytoplasmic segment spans residues 192–202 (QRFLQAQNIVN). A helical transmembrane segment spans residues 203-223 (PLAYMSLGVFLLHTLLTWLVT). Position 224 (asparagine 224) is a topological domain, vacuolar. Residues 225 to 245 (VLDFGLLGAALILSFSWWLLV) traverse the membrane as a helical segment. Residues 246–283 (AVNGMYILMSPNCKETWTGFSTRAFRGIWPYFKLTVAS) lie on the Cytoplasmic side of the membrane. Residues 284-304 (AVMLCLEIWYNQGLVIISGLL) traverse the membrane as a helical segment. Residues 305–312 (SNPTISLD) lie on the Vacuolar side of the membrane. A helical membrane pass occupies residues 313–333 (AISICMYYLNWDMQFMLGLSA). The Cytoplasmic portion of the chain corresponds to 334-355 (AISVRVSNELGAGNPRVAMLSV). Residues 356–376 (VVVNITTVLISSVLCVIVLVF) traverse the membrane as a helical segment. Residues 377-389 (RVGLSKAFTSDAE) are Vacuolar-facing. A helical transmembrane segment spans residues 390 to 410 (VIAAVSDLFPLLAVSIFLNGI). Residues 411–425 (QPILSGVAIGSGWQA) are Cytoplasmic-facing. The chain crosses the membrane as a helical span at residues 426–446 (VVAYVNLVTYYVIGLPIGCVL). Residues 447–453 (GFKTSLG) lie on the Vacuolar side of the membrane. The chain crosses the membrane as a helical span at residues 454–474 (VAGIWWGMIAGVILQTLTLIV). The Cytoplasmic portion of the chain corresponds to 475-507 (LTLKTNWTSEVENAAQRVKTSATENQEMANAGV).

This sequence belongs to the multi antimicrobial extrusion (MATE) (TC 2.A.66.1) family. As to expression, expressed in reproductive tissues, from buds to siliques. Restricted to the endothelium layer of the ovule and the seed coat.

It localises to the vacuole membrane. It participates in secondary metabolite biosynthesis; flavonoid biosynthesis. Functionally, acts as a flavonoid/H(+)-antiporter that control the vacuolar sequestration of flavonoids in the seed coat endothelium. Could transport the anthocyanin cyanidin-3-O-glucoside and epicatechin 3'-O-glucoside in vitro. The protein is Protein DETOXIFICATION 41 of Arabidopsis thaliana (Mouse-ear cress).